The chain runs to 432 residues: Glutamate-1-semialdehyde 2,1-aminomutase 1 (432 aa).

N6-(pyridoxal phosphate)lysine is present on Lys-268.

This sequence belongs to the class-III pyridoxal-phosphate-dependent aminotransferase family. HemL subfamily. In terms of assembly, homodimer. It depends on pyridoxal 5'-phosphate as a cofactor.

Its subcellular location is the cytoplasm. It catalyses the reaction (S)-4-amino-5-oxopentanoate = 5-aminolevulinate. Its pathway is porphyrin-containing compound metabolism; protoporphyrin-IX biosynthesis; 5-aminolevulinate from L-glutamyl-tRNA(Glu): step 2/2. This chain is Glutamate-1-semialdehyde 2,1-aminomutase 1, found in Bacillus cereus (strain ZK / E33L).